We begin with the raw amino-acid sequence, 127 residues long: Group 3 truncated hemoglobin ctb (127 aa).

Heme-binding residues include Tyr64 and His72.

This sequence belongs to the truncated hemoglobin family. Group III subfamily. Monomer. Heme is required as a cofactor.

Its subcellular location is the cytoplasm. Its function is as follows. Has been suggested to be involved in cytochrome c peroxidase or P450-like oxygen chemistry or cyanide detoxification. The high oxygen affinity of this protein suggests that it probably does not function as an oxygen transporter. The protein is Group 3 truncated hemoglobin ctb (ctb) of Campylobacter jejuni subsp. jejuni serotype O:2 (strain ATCC 700819 / NCTC 11168).